The sequence spans 239 residues: DnaA regulatory inactivator Hda (239 aa).

This sequence belongs to the DnaA family. HdA subfamily. The active form seems to be an ADP-bound monomer. Forms the RIDA complex (regulatory inactivation of DnaA) of ATP-DnaA, ADP-Hda and the DNA-loaded beta sliding clamp (dnaN).

Mediates the interaction of DNA replication initiator protein DnaA with DNA polymerase subunit beta sliding clamp (dnaN). Stimulates hydrolysis of ATP-DnaA to ADP-DnaA, rendering DnaA inactive for reinitiation, a process called regulatory inhibition of DnaA or RIDA. The polypeptide is DnaA regulatory inactivator Hda (Yersinia enterocolitica serotype O:8 / biotype 1B (strain NCTC 13174 / 8081)).